We begin with the raw amino-acid sequence, 260 residues long: 1-(5-phosphoribosyl)-5-[(5-phosphoribosylamino)methylideneamino] imidazole-4-carboxamide isomerase (260 aa).

Aspartate 8 functions as the Proton acceptor in the catalytic mechanism. Aspartate 130 functions as the Proton donor in the catalytic mechanism.

Belongs to the HisA/HisF family.

It localises to the cytoplasm. It catalyses the reaction 1-(5-phospho-beta-D-ribosyl)-5-[(5-phospho-beta-D-ribosylamino)methylideneamino]imidazole-4-carboxamide = 5-[(5-phospho-1-deoxy-D-ribulos-1-ylimino)methylamino]-1-(5-phospho-beta-D-ribosyl)imidazole-4-carboxamide. It functions in the pathway amino-acid biosynthesis; L-histidine biosynthesis; L-histidine from 5-phospho-alpha-D-ribose 1-diphosphate: step 4/9. The chain is 1-(5-phosphoribosyl)-5-[(5-phosphoribosylamino)methylideneamino] imidazole-4-carboxamide isomerase from Chlorobaculum tepidum (strain ATCC 49652 / DSM 12025 / NBRC 103806 / TLS) (Chlorobium tepidum).